The chain runs to 583 residues: Bifunctional lycopene cyclase/phytoene synthase (583 aa).

Residues 1–243 (MGFDYALVHL…IVFGQLAFDN (243 aa)) are lycopene beta-cyclase. A run of 7 helical transmembrane segments spans residues 3–23 (FDYALVHLKYTIPPAVLLTWL), 35–55 (KVGYLVSIAVASTIPWDSYLI), 75–97 (IPLEEVFFFIIQTYNTSLLYLLL), 120–140 (YMRLAGQVFFLALIAWGWRCI), 151–171 (LILVWAGPFLLMLWSLAYQFI), 173–193 (ALPVTNTALPIFLPTLYLWVV), and 221–241 (IEEALFFLATNALIVFGQLAF). The phytoene synthase stretch occupies residues 250-583 (TFPHLFTGPS…MVAWRTLNSK (334 aa)).

The protein in the N-terminal section; belongs to the lycopene beta-cyclase family. It in the C-terminal section; belongs to the phytoene/squalene synthase family.

The protein resides in the membrane. It catalyses the reaction all-trans-lycopene = gamma-carotene. The enzyme catalyses gamma-carotene = all-trans-beta-carotene. The catalysed reaction is 2 (2E,6E,10E)-geranylgeranyl diphosphate = 15-cis-phytoene + 2 diphosphate. Its pathway is carotenoid biosynthesis; beta-carotene biosynthesis. It functions in the pathway carotenoid biosynthesis; phytoene biosynthesis; all-trans-phytoene from geranylgeranyl diphosphate: step 1/1. Functionally, bifunctional enzyme that catalyzes the reactions from geranylgeranyl diphosphate to phytoene (phytoene synthase) and lycopene to beta-carotene via the intermediate gamma-carotene (lycopene cyclase). The sequence is that of Bifunctional lycopene cyclase/phytoene synthase from Pyrenophora tritici-repentis (strain Pt-1C-BFP) (Wheat tan spot fungus).